Here is a 214-residue protein sequence, read N- to C-terminus: Cytochrome b (214 aa).

Helical transmembrane passes span 31–51 (FGSM…FLAI), 75–96 (WIMQ…YIHI), 111–131 (WLSG…GYVL), and 176–196 (FFAL…IHIL). Positions 81 and 95 each coordinate heme b. Positions 180 and 194 each coordinate heme b. Histidine 199 provides a ligand contact to a ubiquinone.

This sequence belongs to the cytochrome b family. As to quaternary structure, the cytochrome bc1 complex contains 3 respiratory subunits (MT-CYB, CYC1 and UQCRFS1), 2 core proteins (UQCRC1 and UQCRC2) and probably 6 low-molecular weight proteins. Heme b is required as a cofactor.

Its subcellular location is the mitochondrion inner membrane. Functionally, component of the ubiquinol-cytochrome c reductase complex (complex III or cytochrome b-c1 complex) that is part of the mitochondrial respiratory chain. The b-c1 complex mediates electron transfer from ubiquinol to cytochrome c. Contributes to the generation of a proton gradient across the mitochondrial membrane that is then used for ATP synthesis. In Trimeresurus stejnegeri (Chinese green tree viper), this protein is Cytochrome b (MT-CYB).